The sequence spans 134 residues: Protein PsiE homolog (134 aa).

A run of 4 helical transmembrane segments spans residues 14-34, 56-76, 82-102, and 106-126; these read LQWI…IFLI, VESI…IKYF, FPLR…IIVS, and PMET…LYIS.

The protein belongs to the PsiE family.

It is found in the cell membrane. The sequence is that of Protein PsiE homolog from Bacillus anthracis.